Consider the following 422-residue polypeptide: Serine hydroxymethyltransferase (422 aa).

Residues Leu-118 and 122–124 (GHL) contribute to the (6S)-5,6,7,8-tetrahydrofolate site. Lys-227 carries the post-translational modification N6-(pyridoxal phosphate)lysine. (6S)-5,6,7,8-tetrahydrofolate contacts are provided by residues Glu-243 and 351–353 (SPF).

Belongs to the SHMT family. In terms of assembly, homodimer. Requires pyridoxal 5'-phosphate as cofactor.

The protein localises to the cytoplasm. The catalysed reaction is (6R)-5,10-methylene-5,6,7,8-tetrahydrofolate + glycine + H2O = (6S)-5,6,7,8-tetrahydrofolate + L-serine. It participates in one-carbon metabolism; tetrahydrofolate interconversion. It functions in the pathway amino-acid biosynthesis; glycine biosynthesis; glycine from L-serine: step 1/1. Catalyzes the reversible interconversion of serine and glycine with tetrahydrofolate (THF) serving as the one-carbon carrier. This reaction serves as the major source of one-carbon groups required for the biosynthesis of purines, thymidylate, methionine, and other important biomolecules. Also exhibits THF-independent aldolase activity toward beta-hydroxyamino acids, producing glycine and aldehydes, via a retro-aldol mechanism. This chain is Serine hydroxymethyltransferase, found in Fervidobacterium nodosum (strain ATCC 35602 / DSM 5306 / Rt17-B1).